A 144-amino-acid chain; its full sequence is Angiogenin-4 (144 aa).

A signal peptide spans 1-24; that stretch reads MTMSPCPLLLVFVLGLVVIPPTLA. His-36 functions as the Proton acceptor in the catalytic mechanism. Intrachain disulfides connect Cys-49–Cys-103, Cys-62–Cys-114, and Cys-80–Cys-129. A Nucleolar localization signal motif is present at residues 54 to 58; the sequence is KERKL. His-136 acts as the Proton donor in catalysis.

The protein belongs to the pancreatic ribonuclease family. As to expression, detected in small intestine, caecum and colon, with the highest expression in Paneth cells in the intestinal epithelium.

It is found in the secreted. It localises to the cytoplasmic vesicle. The protein resides in the secretory vesicle lumen. Its subcellular location is the nucleus. The protein localises to the nucleolus. Its function is as follows. Has bactericidal activity against E.faecalis and L.monocytogenes, but not against L.innocua and E.coli. Promotes angiogenesis (in vitro). Has low ribonuclease activity (in vitro). Promotes proliferation of melanoma cells, but not of endothelial cells or fibroblasts (in vitro). In Mus musculus (Mouse), this protein is Angiogenin-4 (Ang4).